The primary structure comprises 298 residues: WRKY transcription factor 22 (298 aa).

Disordered stretches follow at residues 75-116 and 181-220; these read EEPR…IQHK and AEHN…TYSS. A compositionally biased stretch (low complexity) spans 88–103; sequence SLSASSGSVTSKPSGS. Positions 107–116 are enriched in basic residues; the sequence is RSKRRKIQHK. A DNA-binding region (WRKY) is located at residues 122 to 188; that stretch reads AAEALNSDVW…YTAEHNHPAP (67 aa). Positions 190–220 are enriched in polar residues; sequence HRNSLAGSTRQKPSDQQTSKSPTTTIATYSS.

Belongs to the WRKY group II-e family.

Its subcellular location is the nucleus. Functionally, transcription factor involved in the expression of defense genes in innate immune response of plants. Interacts specifically with the W box (5'-(T)TGAC[CT]-3'), a frequently occurring elicitor-responsive cis-acting element. Activates WRKY 29, SIRK and its own promoters. This Arabidopsis thaliana (Mouse-ear cress) protein is WRKY transcription factor 22 (WRKY22).